The primary structure comprises 174 residues: Interferon gamma (174 aa).

The signal sequence occupies residues 1-23 (MHTTRCILALLLCLTQAMSGCYC). Pyrrolidone carboxylic acid is present on glutamine 24. N-linked (GlcNAc...) asparagine glycosylation is found at asparagine 39 and asparagine 106.

Belongs to the type II (or gamma) interferon family. In terms of assembly, homodimer. Interacts with IFNGR1 (via extracellular domain); this interaction promotes IFNGR1 dimerization. In terms of tissue distribution, released primarily from activated T lymphocytes.

The protein localises to the secreted. Type II interferon produced by immune cells such as T-cells and NK cells that plays crucial roles in antimicrobial, antiviral, and antitumor responses by activating effector immune cells and enhancing antigen presentation. Primarily signals through the JAK-STAT pathway after interaction with its receptor IFNGR1 to affect gene regulation. Upon IFNG binding, IFNGR1 intracellular domain opens out to allow association of downstream signaling components JAK2, JAK1 and STAT1, leading to STAT1 activation, nuclear translocation and transcription of IFNG-regulated genes. Many of the induced genes are transcription factors such as IRF1 that are able to further drive regulation of a next wave of transcription. Plays a role in class I antigen presentation pathway by inducing a replacement of catalytic proteasome subunits with immunoproteasome subunits. In turn, increases the quantity, quality, and repertoire of peptides for class I MHC loading. Increases the efficiency of peptide generation also by inducing the expression of activator PA28 that associates with the proteasome and alters its proteolytic cleavage preference. Up-regulates as well MHC II complexes on the cell surface by promoting expression of several key molecules such as cathepsins B/CTSB, H/CTSH, and L/CTSL. Participates in the regulation of hematopoietic stem cells during development and under homeostatic conditions by affecting their development, quiescence, and differentiation. The protein is Interferon gamma (IFNG) of Mesocricetus auratus (Golden hamster).